We begin with the raw amino-acid sequence, 867 residues long: Inactive tyrosine-protein kinase kin-32 (867 aa).

In terms of domain architecture, FERM spans 3-327 (GLARVFLIGG…GYQMLYNQRD (325 aa)). The 265-residue stretch at 367-631 (ITLKELIGGG…IIEDVRQQII (265 aa)) folds into the Protein kinase domain. Residues 373 to 381 (IGGGQFGNV) and K400 contribute to the ATP site. A coiled-coil region spans residues 662-691 (TLYRTMEDQKRQAEEDAKWLEQEDDEDEDD). The disordered stretch occupies residues 674-729 (AEEDAKWLEQEDDEDEDDQDIDQIPSTSHSSVENIRTSNGYLHHTPTSTRSLRFED). A compositionally biased stretch (acidic residues) spans 683-694 (QEDDEDEDDQDI). Polar residues predominate over residues 698–724 (PSTSHSSVENIRTSNGYLHHTPTSTRS).

This sequence belongs to the protein kinase superfamily. Tyr protein kinase family. FAK subfamily. In terms of tissue distribution, expressed in body wall muscles and some neurons in the head.

Functionally, has apparently no tyrosine kinase activity in vitro when expressed in mammalian cells. The protein is Inactive tyrosine-protein kinase kin-32 of Caenorhabditis elegans.